The chain runs to 527 residues: Glutamate--cysteine ligase (527 aa).

The protein belongs to the glutamate--cysteine ligase type 1 family. Type 1 subfamily.

It catalyses the reaction L-cysteine + L-glutamate + ATP = gamma-L-glutamyl-L-cysteine + ADP + phosphate + H(+). Its pathway is sulfur metabolism; glutathione biosynthesis; glutathione from L-cysteine and L-glutamate: step 1/2. The polypeptide is Glutamate--cysteine ligase (Bordetella petrii (strain ATCC BAA-461 / DSM 12804 / CCUG 43448)).